Reading from the N-terminus, the 381-residue chain is tRNA pseudouridine synthase D (381 aa).

D81 functions as the Nucleophile in the catalytic mechanism. Positions G160–V335 constitute a TRUD domain.

This sequence belongs to the pseudouridine synthase TruD family.

It carries out the reaction uridine(13) in tRNA = pseudouridine(13) in tRNA. Its function is as follows. Responsible for synthesis of pseudouridine from uracil-13 in transfer RNAs. In Helicobacter pylori (strain ATCC 700392 / 26695) (Campylobacter pylori), this protein is tRNA pseudouridine synthase D.